The following is a 1124-amino-acid chain: Translation initiation factor IF-2 (1124 aa).

The segment covering 32–41 (IAAKSHSSSI) has biased composition (low complexity). 2 disordered regions span residues 32–451 (IAAK…QKVH) and 480–523 (LARP…RAAR). The span at 94 to 104 (ATSSSEISQVK) shows a compositional bias: polar residues. Positions 134–173 (VNPTTTPTSSPPKTAARPVNAPISRPATPSRPSAPTPRSA) are enriched in low complexity. Residues 192 to 203 (GQTSTSSKATTV) show a composition bias toward polar residues. The segment covering 214-227 (SRPQSPAAPGRSAP) has biased composition (low complexity). 2 stretches are compositionally biased toward basic and acidic residues: residues 235-246 (SDRKAPKPELVG) and 261-272 (PEPEGQRPDKKR). Low complexity-rich tracts occupy residues 274 to 283 (GISPRPIGGP) and 411 to 422 (RPAQAPAAGAPR). Over residues 425-439 (GRPDWDDSAKLEALR) the composition is skewed to basic and acidic residues. 2 stretches are compositionally biased toward basic residues: residues 484-493 (AKPKSQKKPA) and 500-514 (LRKRKKETTRQRQRR). Residues 615 to 787 (RRPPVVTVMG…ILLVTEVEDL (173 aa)) form the tr-type G domain. The segment at 624 to 631 (GHVDHGKT) is G1. 624 to 631 (GHVDHGKT) contributes to the GTP binding site. The segment at 649 to 653 (GITQH) is G2. The segment at 674-677 (DTPG) is G3. GTP contacts are provided by residues 674-678 (DTPGH) and 728-731 (NKTD). The G4 stretch occupies residues 728-731 (NKTD). A G5 region spans residues 764-766 (SAI).

Belongs to the TRAFAC class translation factor GTPase superfamily. Classic translation factor GTPase family. IF-2 subfamily.

The protein resides in the cytoplasm. Its function is as follows. One of the essential components for the initiation of protein synthesis. Protects formylmethionyl-tRNA from spontaneous hydrolysis and promotes its binding to the 30S ribosomal subunits. Also involved in the hydrolysis of GTP during the formation of the 70S ribosomal complex. The chain is Translation initiation factor IF-2 from Prochlorococcus marinus (strain MIT 9303).